The primary structure comprises 381 residues: F-box/LRR-repeat protein At4g14103 (381 aa).

The region spanning 7 to 60 (RDVISSLPDDISSHILSFLPTKEAASTSVLSKKWRYLFAFVPNLDLDDSVYLNP) is the F-box domain. 6 LRR repeats span residues 118-146 (DLHL…KLRF), 171-196 (HFEE…VLDD), 218-243 (SWQE…KFTD), 249-274 (YPKV…LINY), 299-330 (TLYL…TIES), and 331-356 (NPRV…IFQG).

This Arabidopsis thaliana (Mouse-ear cress) protein is F-box/LRR-repeat protein At4g14103.